A 147-amino-acid polypeptide reads, in one-letter code: Proteinase inhibitor type-2 (147 aa).

An N-terminal signal peptide occupies residues 1-25; that stretch reads MAVHKEVSFVAYLLIVLGMFLYVDA. 2 tandem repeats follow at residues 25–81 and 82–141. Intrachain disulfides connect Cys-28-Cys-116, Cys-32-Cys-112, Cys-40-Cys-122, Cys-52-Cys-89, Cys-55-Cys-73, Cys-56-Cys-85, Cys-62-Cys-98, and Cys-115-Cys-133.

Belongs to the protease inhibitor I20 (potato type II proteinase inhibitor) family.

In Solanum tuberosum (Potato), this protein is Proteinase inhibitor type-2.